The sequence spans 450 residues: Homogentisate 1,2-dioxygenase (450 aa).

The active-site Proton acceptor is His304. Positions 347 and 353 each coordinate Fe cation. Homogentisate is bound by residues Tyr362 and His383. Position 383 (His383) interacts with Fe cation.

The protein belongs to the homogentisate dioxygenase family. As to quaternary structure, hexamer; dimer of trimers. Fe cation serves as cofactor.

It catalyses the reaction homogentisate + O2 = 4-maleylacetoacetate + H(+). Its pathway is amino-acid degradation; L-phenylalanine degradation; acetoacetate and fumarate from L-phenylalanine: step 4/6. Its function is as follows. Involved in the catabolism of homogentisate (2,5-dihydroxyphenylacetate or 2,5-OH-PhAc), a central intermediate in the degradation of phenylalanine and tyrosine. Catalyzes the oxidative ring cleavage of the aromatic ring of homogentisate to yield maleylacetoacetate. The sequence is that of Homogentisate 1,2-dioxygenase from Burkholderia thailandensis (strain ATCC 700388 / DSM 13276 / CCUG 48851 / CIP 106301 / E264).